A 256-amino-acid polypeptide reads, in one-letter code: Thiazole synthase (256 aa).

The Schiff-base intermediate with DXP role is filled by lysine 95. 1-deoxy-D-xylulose 5-phosphate is bound by residues glycine 156, 182-183, and 204-205; these read AG and NT.

Belongs to the ThiG family. In terms of assembly, homotetramer. Forms heterodimers with either ThiH or ThiS.

The protein localises to the cytoplasm. The catalysed reaction is [ThiS sulfur-carrier protein]-C-terminal-Gly-aminoethanethioate + 2-iminoacetate + 1-deoxy-D-xylulose 5-phosphate = [ThiS sulfur-carrier protein]-C-terminal Gly-Gly + 2-[(2R,5Z)-2-carboxy-4-methylthiazol-5(2H)-ylidene]ethyl phosphate + 2 H2O + H(+). Its pathway is cofactor biosynthesis; thiamine diphosphate biosynthesis. Its function is as follows. Catalyzes the rearrangement of 1-deoxy-D-xylulose 5-phosphate (DXP) to produce the thiazole phosphate moiety of thiamine. Sulfur is provided by the thiocarboxylate moiety of the carrier protein ThiS. In vitro, sulfur can be provided by H(2)S. This chain is Thiazole synthase, found in Salmonella schwarzengrund (strain CVM19633).